We begin with the raw amino-acid sequence, 347 residues long: uncharacterized protein (347 aa).

Coiled-coil stretches lie at residues 148–201 (DQQS…EKDG) and 261–298 (LENL…DTFS). A disordered region spans residues 151–203 (SISNLRKEEKEKQKENENENENENENENENEKENQELDKKVNQTNDNEKDGDE). The segment covering 155 to 167 (LRKEEKEKQKENE) has biased composition (basic and acidic residues). A compositionally biased stretch (acidic residues) spans 168–178 (NENENENENEN). The span at 179 to 191 (ENEKENQELDKKV) shows a compositional bias: basic and acidic residues.

This is an uncharacterized protein from Dictyostelium discoideum (Social amoeba).